Consider the following 616-residue polypeptide: Sulfite reductase [NADPH] hemoprotein beta-component (616 aa).

The span at 1 to 10 shows a compositional bias: basic and acidic residues; that stretch reads MDDHSPRDAA. The tract at residues 1-35 is disordered; sequence MDDHSPRDAAETPAPGPAATPAKRVYETPPTSRPI. A compositionally biased stretch (low complexity) spans 11–22; it reads ETPAPGPAATPA. [4Fe-4S] cluster contacts are provided by Cys-470, Cys-476, Cys-515, and Cys-519. Position 519 (Cys-519) interacts with siroheme.

This sequence belongs to the nitrite and sulfite reductase 4Fe-4S domain family. Alpha(8)-beta(8). The alpha component is a flavoprotein, the beta component is a hemoprotein. It depends on siroheme as a cofactor. [4Fe-4S] cluster serves as cofactor.

The enzyme catalyses hydrogen sulfide + 3 NADP(+) + 3 H2O = sulfite + 3 NADPH + 4 H(+). It participates in sulfur metabolism; hydrogen sulfide biosynthesis; hydrogen sulfide from sulfite (NADPH route): step 1/1. Its function is as follows. Component of the sulfite reductase complex that catalyzes the 6-electron reduction of sulfite to sulfide. This is one of several activities required for the biosynthesis of L-cysteine from sulfate. The sequence is that of Sulfite reductase [NADPH] hemoprotein beta-component from Methylobacterium radiotolerans (strain ATCC 27329 / DSM 1819 / JCM 2831 / NBRC 15690 / NCIMB 10815 / 0-1).